A 109-amino-acid polypeptide reads, in one-letter code: Cell division protein ZapA (109 aa).

Residues 21 to 99 (PEQLDALNQA…IEQALLEQGR (79 aa)) are a coiled coil.

It belongs to the ZapA family. Type 1 subfamily. As to quaternary structure, homodimer. Interacts with FtsZ.

It localises to the cytoplasm. Its function is as follows. Activator of cell division through the inhibition of FtsZ GTPase activity, therefore promoting FtsZ assembly into bundles of protofilaments necessary for the formation of the division Z ring. It is recruited early at mid-cell but it is not essential for cell division. This Edwardsiella ictaluri (strain 93-146) protein is Cell division protein ZapA.